A 189-amino-acid chain; its full sequence is Potassium-transporting ATPase KdpC subunit (189 aa).

Residues 6–26 (PAILLFIMFTIICGGIYPALV) traverse the membrane as a helical segment.

The protein belongs to the KdpC family. The system is composed of three essential subunits: KdpA, KdpB and KdpC.

The protein localises to the cell inner membrane. Functionally, part of the high-affinity ATP-driven potassium transport (or Kdp) system, which catalyzes the hydrolysis of ATP coupled with the electrogenic transport of potassium into the cytoplasm. This subunit acts as a catalytic chaperone that increases the ATP-binding affinity of the ATP-hydrolyzing subunit KdpB by the formation of a transient KdpB/KdpC/ATP ternary complex. In Trichlorobacter lovleyi (strain ATCC BAA-1151 / DSM 17278 / SZ) (Geobacter lovleyi), this protein is Potassium-transporting ATPase KdpC subunit.